The primary structure comprises 419 residues: UDP-N-acetylglucosamine 1-carboxyvinyltransferase (419 aa).

Position 22–23 (22–23) interacts with phosphoenolpyruvate; it reads KN. Residue R92 coordinates UDP-N-acetyl-alpha-D-glucosamine. C116 acts as the Proton donor in catalysis. C116 bears the 2-(S-cysteinyl)pyruvic acid O-phosphothioketal mark. Residues 121–125, D305, and I327 contribute to the UDP-N-acetyl-alpha-D-glucosamine site; that span reads RPIDQ.

This sequence belongs to the EPSP synthase family. MurA subfamily.

Its subcellular location is the cytoplasm. The enzyme catalyses phosphoenolpyruvate + UDP-N-acetyl-alpha-D-glucosamine = UDP-N-acetyl-3-O-(1-carboxyvinyl)-alpha-D-glucosamine + phosphate. The protein operates within cell wall biogenesis; peptidoglycan biosynthesis. In terms of biological role, cell wall formation. Adds enolpyruvyl to UDP-N-acetylglucosamine. The sequence is that of UDP-N-acetylglucosamine 1-carboxyvinyltransferase from Trichlorobacter lovleyi (strain ATCC BAA-1151 / DSM 17278 / SZ) (Geobacter lovleyi).